A 150-amino-acid polypeptide reads, in one-letter code: UPF0756 membrane protein ECA1265 (150 aa).

Helical transmembrane passes span 1–21, 51–71, 82–102, and 127–147; these read MAYI…GIIS, YGLS…IASG, FLHW…WLGG, and ALFR…SLLI.

The protein belongs to the UPF0756 family.

The protein localises to the cell membrane. In Pectobacterium atrosepticum (strain SCRI 1043 / ATCC BAA-672) (Erwinia carotovora subsp. atroseptica), this protein is UPF0756 membrane protein ECA1265.